Reading from the N-terminus, the 633-residue chain is MTNQLPNKVELAEVVPQNGGVFLTWEDLWVTASSVKDGSKAILKGLTGYAMPGELLAIMGPSGSGKSTLLDTIAGRLGSSTRQSGDILINGRRQTLAYGSSAYVTQDDTLLATLTIKEAVYYSAELQLPNSMSKSEKKEIADVTLKGMGLQDAMETRIGGWSGKGISGGQKRRVSICLEILTRPKLLFLDEPTSGLDSAASYYVMKAIASQCQGRTIIASIHQPSVDVFSLFHSLCLLSSGRTVYFGPASAANEFFALSGFPCPTLQNPSDHFLKTINSDFDQDIEEGSTRRKSTEEVIDILIKSYKASDKYNAVQSQVAEICQQEGEMLDKRSHASFITQSLVLTRRSFINMSRDLGYYWLRLAVYVVIAVGLGSLYYDVGFSAASVQARGSMLMFVASFITFMAIGGFPSFVEDMKVFQREKLNGHYGSGSFVIANTLSAMPYLLLVSLIPGAIAYFMTGLQNGFEHFIYFALVLFTCMMIVESLMMIVASMVPNFLMGLIAGAGIQALMLLSGGFFRLPNDLPKPFWKYPLHYVAFHKYAYEGMFKNEFEGLKIHDVNGEDILRNTWQMNMDYSKWIDLVILLGMLVLYRVLFLLVVKAGEIVKPAIRAFMSHSPNQINSAERPLDVFDS.

The 243-residue stretch at 23-265 (LTWEDLWVTA…FALSGFPCPT (243 aa)) folds into the ABC transporter domain. 60-67 (GPSGSGKS) contacts ATP. The 213-residue stretch at 340–552 (TQSLVLTRRS…AYEGMFKNEF (213 aa)) folds into the ABC transmembrane type-2 domain. Asparagine 352 carries an N-linked (GlcNAc...) asparagine glycan. The next 6 membrane-spanning stretches (helical) occupy residues 364–384 (LAVYVVIAVGLGSLYYDVGFS), 394–414 (MLMFVASFITFMAIGGFPSFV), 440–460 (LSAMPYLLLVSLIPGAIAYFM), 470–490 (FIYFALVLFTCMMIVESLMMI), 498–518 (FLMGLIAGAGIQALMLLSGGF), and 580–600 (IDLVILLGMLVLYRVLFLLVV).

Belongs to the ABC transporter superfamily. ABCG family. In terms of assembly, homodimer. Restricted to the petals, with the highest expression in the limb and, to a lesser extent, in petal tubes, probably in both epidermal and mesophyll cell layers.

The protein resides in the cell membrane. ABC transporter controlling the release of volatile organic compounds (VOCs), including floral volatile benzenoids and phenylpropanoids (FVBP), in flowers of fragrant cultivars (e.g. cv. Mitchell and cv. V26). This scent, mostly produced in the evening and night by the petals, attracts the pollinators (e.g. the night-active hawkmoth pollinator Manduca sexta). This Petunia hybrida (Petunia) protein is ABC transporter G family member 1.